The chain runs to 200 residues: Guanylyl cyclase-activating protein 2 (200 aa).

A lipid anchor (N-myristoyl glycine) is attached at G2. EF-hand domains follow at residues 14–31 (GEID…FVME), 53–88 (EASQ…VLRG), 89–124 (TLEH…IYQL), and 141–176 (TPEE…DKWV). Ca(2+) is bound by residues D66, N68, D70, T72, E77, D102, D104, N106, C108, E113, D154, N156, D158, Q160, and E165.

Post-translationally, the N-terminus is blocked. As to expression, in the retina, it is expressed in cone and rod photoreceptor cells.

Its subcellular location is the cell membrane. The protein localises to the photoreceptor inner segment. It is found in the cell projection. The protein resides in the cilium. It localises to the photoreceptor outer segment. In terms of biological role, stimulates two retinal guanylyl cyclases (GCs) GUCY2D and GUCY2F when free calcium ions concentration is low, and inhibits GUCY2D and GUCY2F when free calcium ions concentration is elevated. This Ca(2+)-sensitive regulation of GCs is a key event in recovery of the dark state of rod photoreceptors following light exposure. May be involved in cone photoreceptor response and recovery of response in bright light. This Homo sapiens (Human) protein is Guanylyl cyclase-activating protein 2 (GUCA1B).